Reading from the N-terminus, the 1765-residue chain is Sodium channel protein type 11 subunit alpha (1765 aa).

The Cytoplasmic segment spans residues 1–126 (MEERYYPVIF…PIRSFMIRIS (126 aa)). One copy of the I repeat lies at 115–406 (FNPIRSFMIR…VTMAYEEQNR (292 aa)). Residues 127–148 (VHSVFSMFIICTVIINCMFMAN) traverse the membrane as a helical segment. The N-linked (GlcNAc...) asparagine glycan is linked to Asn-149. The Extracellular segment spans residues 149–159 (NSSVDSRPSSN). A helical transmembrane segment spans residues 160–179 (IPEYVFIGIYVLEAVIKILA). At 180 to 191 (RGFIVDEFSYLR) the chain is on the cytoplasmic side. Residues 192–211 (DPWNWLDFIVIGTAIAPCFL) traverse the membrane as a helical segment. Over 212 to 219 (GNKVNNLS) the chain is Extracellular. Asn-217 is a glycosylation site (N-linked (GlcNAc...) asparagine). Residues 220-239 (TLRTFRVLRALKAISVISGL) traverse the membrane as a helical; Voltage-sensor segment. Over 240 to 255 (KVIVGALLRSVKKLVD) the chain is Cytoplasmic. The helical transmembrane segment at 256-269 (VMVLTLFCLSIFAL) threads the bilayer. Topologically, residues 270–342 (VGQQLFMGIL…PDYNYTNFDS (73 aa)) are extracellular. A disulfide bond links Cys-283 and Cys-320. Residues Asn-303, Asn-327, and Asn-336 are each glycosylated (N-linked (GlcNAc...) asparagine). Residues 343-367 (FGWSFLAMFRVMTQDSWEKLYRQIL) constitute an intramembrane region (pore-forming). Residues 368–374 (RTSGIYF) lie on the Extracellular side of the membrane. A helical transmembrane segment spans residues 375–400 (VFFFVVVIFLGSFYLLNLTLAVVTMA). Topologically, residues 401-570 (YEEQNRNVAA…WLCIKKVLQT (170 aa)) are cytoplasmic. The tract at residues 470–490 (RGSKTARASASDSEDDASKNP) is disordered. Residues 557 to 821 (CSPPWLCIKK…EGETRKTKVQ (265 aa)) form an II repeat. The helical transmembrane segment at 571–594 (IMTDPFTELAITICIIVNTVFLAM) threads the bilayer. Topologically, residues 595–605 (EHHNMDNSLKD) are extracellular. Residues 606–629 (ILKIGNWVFTGIFIAEMCLKIIAL) form a helical membrane-spanning segment. The Cytoplasmic portion of the chain corresponds to 630-637 (DPYHYFRH). A helical membrane pass occupies residues 638-659 (GWNIFDSIVALVSLADVLFHKL). Residues 660-664 (SKNLS) are Extracellular-facing. Residue Asn-662 is glycosylated (N-linked (GlcNAc...) asparagine). The helical; Voltage-sensor transmembrane segment at 665 to 684 (FLASLRVLRVFKLAKSWPTL) threads the bilayer. Topologically, residues 685–699 (NTLIKIIGHSVGALG) are cytoplasmic. Residues 700–722 (NLTVVLTIVVFIFSVVGMRLFGA) form a helical membrane-spanning segment. Residues 723 to 742 (KFNKTCSTSPESLRRWHMGD) are Extracellular-facing. Asn-725 carries N-linked (GlcNAc...) asparagine glycosylation. Residues 743–763 (FYHSFLVVFRILCGEWIENMW) constitute an intramembrane region (pore-forming). The Extracellular segment spans residues 764-773 (ECMQEMEGSP). A disulfide bridge connects residues Cys-765 and Cys-775. Residues 774-799 (LCVIVFVLIMVVGKLVVLNLFIALLL) traverse the membrane as a helical segment. The Cytoplasmic segment spans residues 800–1030 (NSFSNEEKDG…WWNLRKTCYQ (231 aa)). The segment at 850-869 (NSPKPNEATESFAGESRDTA) is disordered. An III repeat occupies 1023-1320 (NLRKTCYQIV…KKYYNAMKKL (298 aa)). A helical membrane pass occupies residues 1031 to 1053 (IVKHSWFESFIIFVILLSSGALI). The Extracellular segment spans residues 1054–1067 (FEDVNLPSRPQVEK). Residues 1068-1093 (LLKCTDNIFTFIFLLEMILKWVAFGF) form a helical membrane-spanning segment. Residues 1094 to 1099 (RKYFTS) lie on the Cytoplasmic side of the membrane. A helical transmembrane segment spans residues 1100 to 1117 (AWCWLDFLIVVVSGLSLT). A topological domain (extracellular) is located at residue Asn-1118. The chain crosses the membrane as a helical; Voltage-sensor span at residues 1119–1140 (LPNLKSFRNLRALRPLRALSQF). At 1141–1159 (EGMKVVVNALMSAIPAILN) the chain is on the cytoplasmic side. Residues 1160-1181 (VLLVCLIFWLIFCILGVNFFSG) traverse the membrane as a helical segment. Residues 1182–1224 (KFGRCINGTDINKYFNASNVPNQSQCLVSNYTWKVPNVNFDNV) are Extracellular-facing. Residues Asn-1188, Asn-1197, Asn-1203, and Asn-1211 are each glycosylated (N-linked (GlcNAc...) asparagine). The segment at residues 1225–1246 (GNAYLALLQVATYKGWLDIMNA) is an intramembrane region (pore-forming). At 1247–1262 (AVDSRGKDEQPAFEAN) the chain is on the extracellular side. Residues 1263–1289 (LYAYLYFVVFIIFGSFFTLNLFIGVII) traverse the membrane as a helical segment. The Cytoplasmic portion of the chain corresponds to 1290-1342 (DNFNQQQKKLGGQDIFMTEEQKKYYNAMKKLGTKKPQKPIPRPLNKCQAFVFD). One copy of the IV repeat lies at 1329–1619 (IPRPLNKCQA…WEKFDPEATQ (291 aa)). A helical transmembrane segment spans residues 1343 to 1366 (LVTSQVFDVIILGLIVTNMIIMMA). Over 1367–1377 (ESEGQPNEVKK) the chain is Extracellular. Residues 1378 to 1401 (IFDILNIVFVVIFTVECLIKVFAL) form a helical membrane-spanning segment. Over 1402-1407 (RQHYFT) the chain is Cytoplasmic. Residues 1408 to 1431 (NGWNLFDCVVVVLSIISTLVSGLE) traverse the membrane as a helical segment. Over 1432-1440 (NSNVFPPTL) the chain is Extracellular. A helical; Voltage-sensor transmembrane segment spans residues 1441-1463 (FRIVRLARIGRILRLVRAARGIR). Over 1464–1478 (TLLFALMMSLPSLFN) the chain is Cytoplasmic. A helical membrane pass occupies residues 1479-1501 (IGLLLFLVMFIYAIFGMNWFSKV). Residues 1502-1515 (KRGSGIDDIFNFDT) lie on the Extracellular side of the membrane. Positions 1516-1538 (FSGSMLCLFQITTSAGWDALLNP) form an intramembrane region, pore-forming. Topologically, residues 1539–1559 (MLESKASCNSSSQESCQQPQI) are extracellular. Residues 1560–1584 (AIVYFVSYIIISFLIVVNMYIAVIL) traverse the membrane as a helical segment. At 1585 to 1765 (ENFNTATEES…DVPKIKVHCD (181 aa)) the chain is on the cytoplasmic side.

This sequence belongs to the sodium channel (TC 1.A.1.10) family. Nav1.9/SCN11A subfamily. In terms of assembly, the voltage-resistant sodium channel consists of an ion conducting pore forming alpha-subunit regulated by one or more auxiliary subunits SCN1B, SCN2B and SCN3B. As to expression, expressed in the dorsal root ganglia (C-fiber neurons), spinal cord, trigeminal ganglia, testis, ovary, uterus and small intestine.

It is found in the cell membrane. The catalysed reaction is Na(+)(in) = Na(+)(out). Sodium channel mediating the voltage-dependent sodium ion permeability of excitable membranes. Assuming opened or closed conformations in response to the voltage difference across the membrane, the protein forms a sodium-selective channel through which sodium ions may pass in accordance with their electrochemical gradient. Involved in membrane depolarization during action potential in nociceptors which function as key relay stations for the electrical transmission of pain signals from the periphery to the central nervous system. Also involved in rapid BDNF-evoked neuronal depolarization. This Mus musculus (Mouse) protein is Sodium channel protein type 11 subunit alpha.